Here is an 88-residue protein sequence, read N- to C-terminus: LYR motif-containing protein 2 (88 aa).

The transit peptide at 1-19 (MAASRLPPATLTLKQFVRR) directs the protein to the mitochondrion.

Belongs to the complex I LYR family.

The protein localises to the mitochondrion. Its function is as follows. Involved in efficient integration of the N-module into mitochondrial respiratory chain complex I. The protein is LYR motif-containing protein 2 (LYRM2) of Pongo abelii (Sumatran orangutan).